The sequence spans 384 residues: Bifunctional enzyme IspD/IspF (384 aa).

2-C-methyl-D-erythritol 4-phosphate cytidylyltransferase stretches follow at residues 1 to 227 (MAKV…EGEQ) and 1 to 228 (MAKV…GEQR). The tract at residues 228-384 (RIGSGFDVHR…QATALITLPF (157 aa)) is 2-C-methyl-D-erythritol 2,4-cyclodiphosphate synthase. A divalent metal cation contacts are provided by Asp234 and His236. 4-CDP-2-C-methyl-D-erythritol 2-phosphate contacts are provided by residues 234–236 (DVH) and 260–261 (HS). An a divalent metal cation-binding site is contributed by His268. 4-CDP-2-C-methyl-D-erythritol 2-phosphate is bound by residues 282–284 (DIG), 358–361 (TTTE), Phe365, and Arg368.

This sequence in the N-terminal section; belongs to the IspD/TarI cytidylyltransferase family. IspD subfamily. It in the C-terminal section; belongs to the IspF family. A divalent metal cation serves as cofactor.

It catalyses the reaction 2-C-methyl-D-erythritol 4-phosphate + CTP + H(+) = 4-CDP-2-C-methyl-D-erythritol + diphosphate. It carries out the reaction 4-CDP-2-C-methyl-D-erythritol 2-phosphate = 2-C-methyl-D-erythritol 2,4-cyclic diphosphate + CMP. Its pathway is isoprenoid biosynthesis; isopentenyl diphosphate biosynthesis via DXP pathway; isopentenyl diphosphate from 1-deoxy-D-xylulose 5-phosphate: step 2/6. The protein operates within isoprenoid biosynthesis; isopentenyl diphosphate biosynthesis via DXP pathway; isopentenyl diphosphate from 1-deoxy-D-xylulose 5-phosphate: step 4/6. Functionally, bifunctional enzyme that catalyzes the formation of 4-diphosphocytidyl-2-C-methyl-D-erythritol from CTP and 2-C-methyl-D-erythritol 4-phosphate (MEP) (IspD), and catalyzes the conversion of 4-diphosphocytidyl-2-C-methyl-D-erythritol 2-phosphate (CDP-ME2P) to 2-C-methyl-D-erythritol 2,4-cyclodiphosphate (ME-CPP) with a corresponding release of cytidine 5-monophosphate (CMP) (IspF). This Rhodospirillum rubrum (strain ATCC 11170 / ATH 1.1.1 / DSM 467 / LMG 4362 / NCIMB 8255 / S1) protein is Bifunctional enzyme IspD/IspF.